The primary structure comprises 364 residues: 3-isopropylmalate dehydrogenase (364 aa).

77 to 90 (GPKWDNLPTDKRPE) lines the NAD(+) pocket. Substrate is bound by residues Arg-97, Arg-107, Arg-135, and Asp-224. The Mg(2+) site is built by Asp-224, Asp-248, and Asp-252. 281–293 (GSAPDIAGKGIAN) lines the NAD(+) pocket.

Belongs to the isocitrate and isopropylmalate dehydrogenases family. LeuB type 1 subfamily. Homodimer. The cofactor is Mg(2+). Mn(2+) is required as a cofactor.

The protein localises to the cytoplasm. The enzyme catalyses (2R,3S)-3-isopropylmalate + NAD(+) = 4-methyl-2-oxopentanoate + CO2 + NADH. The protein operates within amino-acid biosynthesis; L-leucine biosynthesis; L-leucine from 3-methyl-2-oxobutanoate: step 3/4. Catalyzes the oxidation of 3-carboxy-2-hydroxy-4-methylpentanoate (3-isopropylmalate) to 3-carboxy-4-methyl-2-oxopentanoate. The product decarboxylates to 4-methyl-2 oxopentanoate. The polypeptide is 3-isopropylmalate dehydrogenase (leuB) (Aquifex aeolicus (strain VF5)).